The following is a 246-amino-acid chain: tRNA (guanine-N(7)-)-methyltransferase (246 aa).

Positions 77, 102, 129, and 152 each coordinate S-adenosyl-L-methionine. Aspartate 152 is a catalytic residue. Residues lysine 156, aspartate 188, and 225-228 (TKFE) contribute to the substrate site.

The protein belongs to the class I-like SAM-binding methyltransferase superfamily. TrmB family.

It catalyses the reaction guanosine(46) in tRNA + S-adenosyl-L-methionine = N(7)-methylguanosine(46) in tRNA + S-adenosyl-L-homocysteine. The protein operates within tRNA modification; N(7)-methylguanine-tRNA biosynthesis. Functionally, catalyzes the formation of N(7)-methylguanine at position 46 (m7G46) in tRNA. The protein is tRNA (guanine-N(7)-)-methyltransferase of Haemophilus influenzae (strain 86-028NP).